Consider the following 309-residue polypeptide: MSSRRRKPEWLRTRPPSGRRFTEIKETLRDRDLNTVCEEANCPNLGDCWSGRDGPGTATFMLLGDRCSRGCNFCDVATGGMDPLDPDEPANVAEAVAEIGLDYVVLTSVDRDDLDDGGAGHFAETIREIKRRDTSVLVEALIPDFQGDTDAVDRIIDADPDVVAHNVETVERLQWPVRDRRAGYEQSLDVLRQIAAADGCYAKTSLMLGVGEYAHEVYRTLGDLSEVGVDIVTFGQYLQPSRSHLEVFEYVTPDTFDVWKRVAETEFGFLYCASGPMVRSSFKAGELFVEALERDGLDIEAARAAAERQ.

[4Fe-4S] cluster contacts are provided by Cys37, Cys42, Cys48, Cys67, Cys71, Cys74, and Ser281. The region spanning 53-270 (DGPGTATFML…RVAETEFGFL (218 aa)) is the Radical SAM core domain.

The protein belongs to the radical SAM superfamily. Lipoyl synthase family. [4Fe-4S] cluster serves as cofactor.

The protein resides in the cytoplasm. The enzyme catalyses [[Fe-S] cluster scaffold protein carrying a second [4Fe-4S](2+) cluster] + N(6)-octanoyl-L-lysyl-[protein] + 2 oxidized [2Fe-2S]-[ferredoxin] + 2 S-adenosyl-L-methionine + 4 H(+) = [[Fe-S] cluster scaffold protein] + N(6)-[(R)-dihydrolipoyl]-L-lysyl-[protein] + 4 Fe(3+) + 2 hydrogen sulfide + 2 5'-deoxyadenosine + 2 L-methionine + 2 reduced [2Fe-2S]-[ferredoxin]. It participates in protein modification; protein lipoylation via endogenous pathway; protein N(6)-(lipoyl)lysine from octanoyl-[acyl-carrier-protein]: step 2/2. Its function is as follows. Catalyzes the radical-mediated insertion of two sulfur atoms into the C-6 and C-8 positions of the octanoyl moiety bound to the lipoyl domains of lipoate-dependent enzymes, thereby converting the octanoylated domains into lipoylated derivatives. This is Lipoyl synthase from Natronomonas pharaonis (strain ATCC 35678 / DSM 2160 / CIP 103997 / JCM 8858 / NBRC 14720 / NCIMB 2260 / Gabara) (Halobacterium pharaonis).